Reading from the N-terminus, the 169-residue chain is Ribosome maturation factor RimM (169 aa).

The region spanning 97–169 is the PRC barrel domain; that stretch reads PGEYYWYQLI…VITVDWDMNF (73 aa).

Belongs to the RimM family. In terms of assembly, binds ribosomal protein uS19.

The protein localises to the cytoplasm. Functionally, an accessory protein needed during the final step in the assembly of 30S ribosomal subunit, possibly for assembly of the head region. Essential for efficient processing of 16S rRNA. May be needed both before and after RbfA during the maturation of 16S rRNA. It has affinity for free ribosomal 30S subunits but not for 70S ribosomes. This is Ribosome maturation factor RimM from Legionella pneumophila subsp. pneumophila (strain Philadelphia 1 / ATCC 33152 / DSM 7513).